The following is a 420-amino-acid chain: FAD-dependent monooxygenase ntnJ (420 aa).

Residues 12–31 (FRVIVVGAGIGGLSAAVALA) form a helical membrane-spanning segment. FAD contacts are provided by Glu-41 and Ala-54. N-linked (GlcNAc...) asparagine glycosylation is present at Asn-124. Residue Arg-187 is part of the active site. Asn-264 carries N-linked (GlcNAc...) asparagine glycosylation. Residues Asp-302 and Val-315 each contribute to the FAD site.

It belongs to the paxM FAD-dependent monooxygenase family. The cofactor is FAD.

It localises to the membrane. It participates in secondary metabolite biosynthesis; terpenoid biosynthesis. FAD-dependent monooxygenase; part of the gene cluster that mediates the biosynthesis of the meroterpenoids nectripenoids A and B, as well as cochliquninone D and isocochliquninone E. The pathway probably begins with the HR-PKS ntnH that catalyzes two chain-extension steps to form a reduced triketide, which then primes the SAT domain in the NR-PKS ntnG to initiate three more cycles of extension to give a linear hexaketide corresponding to the polyketide part of nectripenoids. The FAD-dependent monooxygenase ntnJ then performs an oxidative decarboxylation at C11 of the ntnH/ntnG product, via an electrophilic aromatic hydroxylation with concomitant ipso-decarboxylation. The membrane-bound polyprenyl transferase ntnF then introduces a farnesyl group before the FAD-dependent monooxygenase ntnK functions as the first epoxidase on terminal C12'-C13' olefin, followed by a second epoxidation on C7'-C8' catalyzed by ntnA. The terpene cyclase/mutase ntnI then initiates the sequential tricyclic ring formation through protonation of the terminal epoxide and catalyzes the regioselective and stereoselective 6/6/6-tricyclic ring formation. The cytochrome P450 monooxygenase ntnM may then hydroxylate C1'. This is FAD-dependent monooxygenase ntnJ from Nectria sp.